The sequence spans 302 residues: MSVFIDKNTKVMVQGITGSTALFHTKQMLDYGTKIVAGVTPGKGGQVVEGVPVFNTVEEAKNETGATVSVIYVPAPFAADSILEAADADLDMVICITEHIPVLDMVKVKRYLQGRKTRLVGPNCPGVITADECKIGIMPGYIHKKGHVGVVSRSGTLTYEAVHQLTEEGIGQTTAVGIGGDPVNGTNFIDVLKAFNEDDETKAVVMIGEIGGTAEEEAAEWIKANMTKPVVGFIGGQTAPPGKRMGHAGAIISGGKGTAEEKIKTLNSCGVKTAATPSEIGSTLIEAAKEAGIYESLLTVNK.

Residues 17–20, K43, and 96–98 contribute to the CoA site; these read TGST and ITE. Y159 serves as a coordination point for substrate. Catalysis depends on H247, which acts as the Tele-phosphohistidine intermediate.

Belongs to the succinate/malate CoA ligase alpha subunit family. As to quaternary structure, heterotetramer of two alpha and two beta subunits.

The enzyme catalyses succinate + ATP + CoA = succinyl-CoA + ADP + phosphate. It catalyses the reaction GTP + succinate + CoA = succinyl-CoA + GDP + phosphate. Its pathway is carbohydrate metabolism; tricarboxylic acid cycle; succinate from succinyl-CoA (ligase route): step 1/1. Its function is as follows. Succinyl-CoA synthetase functions in the citric acid cycle (TCA), coupling the hydrolysis of succinyl-CoA to the synthesis of either ATP or GTP and thus represents the only step of substrate-level phosphorylation in the TCA. The alpha subunit of the enzyme binds the substrates coenzyme A and phosphate, while succinate binding and nucleotide specificity is provided by the beta subunit. This chain is Succinate--CoA ligase [ADP-forming] subunit alpha, found in Staphylococcus aureus (strain COL).